We begin with the raw amino-acid sequence, 199 residues long: Large ribosomal subunit protein bL17 (199 aa).

The disordered stretch occupies residues 123–199; sequence DEANRARRAA…EESEAKDDTK (77 aa). Positions 137-152 are enriched in basic and acidic residues; it reads KADERADEKADEKAEE. Over residues 153–199 the composition is skewed to acidic residues; sequence TVEETTEAPAEESTEAAAEETVEETTEAPAEESTEAAEESEAKDDTK.

The protein belongs to the bacterial ribosomal protein bL17 family. Part of the 50S ribosomal subunit. Contacts protein L32.

The protein is Large ribosomal subunit protein bL17 of Mycolicibacterium smegmatis (strain ATCC 700084 / mc(2)155) (Mycobacterium smegmatis).